A 128-amino-acid chain; its full sequence is Claw keratin (128 aa).

A run of 2 repeats spans residues Gly-83 to Tyr-91 and Gly-92 to Tyr-100. The segment at Gly-83–Gly-104 is 3 X 9 AA tandem repeats, Gly-rich. Residues Gly-101 to Cys-109 form a 3; approximate repeat.

This sequence belongs to the avian keratin family. As to expression, abundantly expressed in the claw and at a low level in feather tissue.

The polypeptide is Claw keratin (CKER1) (Gallus gallus (Chicken)).